We begin with the raw amino-acid sequence, 176 residues long: Cell division protein ZapC (176 aa).

It belongs to the ZapC family. Interacts directly with FtsZ.

The protein resides in the cytoplasm. Its function is as follows. Contributes to the efficiency of the cell division process by stabilizing the polymeric form of the cell division protein FtsZ. Acts by promoting interactions between FtsZ protofilaments and suppressing the GTPase activity of FtsZ. The polypeptide is Cell division protein ZapC (Pseudoalteromonas translucida (strain TAC 125)).